The sequence spans 89 residues: UPF0147 protein Msed_2034 (89 aa).

This sequence belongs to the UPF0147 family.

This chain is UPF0147 protein Msed_2034, found in Metallosphaera sedula (strain ATCC 51363 / DSM 5348 / JCM 9185 / NBRC 15509 / TH2).